A 280-amino-acid chain; its full sequence is Pre-mRNA-splicing factor PRP21 (280 aa).

One copy of the SURP motif 1 repeat lies at Asp-11 to Tyr-49. Residues Met-53–Glu-72 are disordered. Residues Val-95 to Phe-135 form an SURP motif 2 repeat. Basic and acidic residues-rich tracts occupy residues Glu-246 to Lys-261 and Ala-269 to Lys-280. The disordered stretch occupies residues Glu-246–Lys-280.

As to quaternary structure, belongs to the CWC complex (or CEF1-associated complex), a spliceosome sub-complex reminiscent of a late-stage spliceosome composed of the U2, U5 and U6 snRNAs and at least BUD13, BUD31, BRR2, CDC40, CEF1, CLF1, CUS1, CWC2, CWC15, CWC21, CWC22, CWC23, CWC24, CWC25, CWC27, ECM2, HSH155, IST3, ISY1, LEA1, MSL1, NTC20, PRP8, PRP9, PRP11, PRP19, PRP21, PRP22, PRP45, PRP46, SLU7, SMB1, SMD1, SMD2, SMD3, SMX2, SMX3, SNT309, SNU114, SPP2, SYF1, SYF2, RSE1 and YJU2.

The protein localises to the nucleus. Its function is as follows. mRNA splicing factors, PRP9, PRP11, and PRP21, are necessary for binding of the U2 snRNP to the pre-mRNA in an early step of spliceosome assembly. This chain is Pre-mRNA-splicing factor PRP21 (PRP21), found in Saccharomyces cerevisiae (strain ATCC 204508 / S288c) (Baker's yeast).